The following is a 223-amino-acid chain: MGQKVNPNGIRLGYIRDWRSTWYADSSSYATKLNEDIKVREFLHKKLAAAAVSKIQIERPAQNAKITIHTARPGIVIGKKGEDVEKLRAEVHKLMGIPVQINIEEVRKPEIDAKLVAESVAQQLEKRVMFRRAMKKAMQAAMKSGAKGIKIMVSGRLGGAEIARSEWARDGRVPLQTFRADVDYATAEALTTYGVIGVKVWIYKGEILPGQIAEKKNNKKGAK.

Residues 39–107 enclose the KH type-2 domain; it reads VREFLHKKLA…PVQINIEEVR (69 aa).

It belongs to the universal ribosomal protein uS3 family. Part of the 30S ribosomal subunit. Forms a tight complex with proteins S10 and S14.

Binds the lower part of the 30S subunit head. Binds mRNA in the 70S ribosome, positioning it for translation. The sequence is that of Small ribosomal subunit protein uS3 from Francisella tularensis subsp. novicida (strain U112).